The sequence spans 562 residues: Putative transport protein NT01EI_2530 (562 aa).

6 helical membrane-spanning segments follow: residues L8–G28, L32–Q52, F66–F86, M94–F114, I118–A138, and H158–A178. RCK C-terminal domains are found at residues L202 to N288 and K290 to F373. Transmembrane regions (helical) follow at residues L383–F403, F406–L426, M443–G463, I477–V497, and I541–V561.

It belongs to the AAE transporter (TC 2.A.81) family. YbjL subfamily.

Its subcellular location is the cell membrane. In Edwardsiella ictaluri (strain 93-146), this protein is Putative transport protein NT01EI_2530.